We begin with the raw amino-acid sequence, 919 residues long: Valine--tRNA ligase (919 aa).

Positions 66–76 (PNVTGQLHMGH) match the 'HIGH' region motif. The 'KMSKS' region signature appears at 562–566 (KMSKS). Position 565 (Lys565) interacts with ATP. A coiled-coil region spans residues 852-919 (TVDKEAERKR…RISARLEELK (68 aa)).

The protein belongs to the class-I aminoacyl-tRNA synthetase family. ValS type 1 subfamily. As to quaternary structure, monomer.

Its subcellular location is the cytoplasm. The catalysed reaction is tRNA(Val) + L-valine + ATP = L-valyl-tRNA(Val) + AMP + diphosphate. Catalyzes the attachment of valine to tRNA(Val). As ValRS can inadvertently accommodate and process structurally similar amino acids such as threonine, to avoid such errors, it has a 'posttransfer' editing activity that hydrolyzes mischarged Thr-tRNA(Val) in a tRNA-dependent manner. The chain is Valine--tRNA ligase from Corynebacterium diphtheriae (strain ATCC 700971 / NCTC 13129 / Biotype gravis).